A 502-amino-acid polypeptide reads, in one-letter code: Ribose import ATP-binding protein RbsA (502 aa).

2 consecutive ABC transporter domains span residues 3 to 239 (VTMR…VGRE) and 249 to 493 (AAPG…TGGA). Residue 35–42 (GENGAGKS) coordinates ATP.

The protein belongs to the ABC transporter superfamily. Ribose importer (TC 3.A.1.2.1) family. As to quaternary structure, the complex is composed of an ATP-binding protein (RbsA), two transmembrane proteins (RbsC) and a solute-binding protein (RbsB).

It is found in the cell inner membrane. The catalysed reaction is D-ribose(out) + ATP + H2O = D-ribose(in) + ADP + phosphate + H(+). Functionally, part of the ABC transporter complex RbsABC involved in ribose import. Responsible for energy coupling to the transport system. This Chromobacterium violaceum (strain ATCC 12472 / DSM 30191 / JCM 1249 / CCUG 213 / NBRC 12614 / NCIMB 9131 / NCTC 9757 / MK) protein is Ribose import ATP-binding protein RbsA.